Here is a 436-residue protein sequence, read N- to C-terminus: Trigger factor (436 aa).

In terms of domain architecture, PPIase FKBP-type spans 161–255 (DDVAIIDFKT…VKEVREKQLP (95 aa)).

It belongs to the FKBP-type PPIase family. Tig subfamily.

The protein resides in the cytoplasm. It catalyses the reaction [protein]-peptidylproline (omega=180) = [protein]-peptidylproline (omega=0). Functionally, involved in protein export. Acts as a chaperone by maintaining the newly synthesized protein in an open conformation. Functions as a peptidyl-prolyl cis-trans isomerase. The protein is Trigger factor of Akkermansia muciniphila (strain ATCC BAA-835 / DSM 22959 / JCM 33894 / BCRC 81048 / CCUG 64013 / CIP 107961 / Muc).